Reading from the N-terminus, the 392-residue chain is Putative non-inhibitory serpin-10 (392 aa).

The interval 333–357 (GTTAVEATYSCCSPTYSGPESPKPR) is RCL.

This sequence belongs to the serpin family.

In Oryza sativa subsp. japonica (Rice), this protein is Putative non-inhibitory serpin-10.